Here is a 44-residue protein sequence, read N- to C-terminus: MESPAFFFTLFLWFFLLSITIYSIYIGFGPPSKRLRDPFEEHED.

A helical transmembrane segment spans residues 6 to 26; that stretch reads FFFTLFLWFFLLSITIYSIYI.

The protein belongs to the PsbN family.

Its subcellular location is the plastid. It localises to the chloroplast thylakoid membrane. May play a role in photosystem I and II biogenesis. This is Protein PsbN from Oedogonium cardiacum (Filamentous green alga).